The sequence spans 772 residues: Acetamidase regulatory protein (772 aa).

Over residues M1 to G16 the composition is skewed to polar residues. The segment at M1–G23 is disordered. Positions A26 to I59 form a DNA-binding region, zn(2)-C6 fungal-type. 3 disordered regions span residues R78–E99, A114–H148, and A627–V690. Residues A114 to P123 are compositionally biased toward low complexity. Composition is skewed to polar residues over residues N124–A144 and P634–S658. Positions L671–P686 are enriched in low complexity.

It localises to the nucleus. Functionally, positively regulates the expression of genes involved in the catabolism of certain amides, omega amino acids, and lactams. The chain is Acetamidase regulatory protein (amdR) from Aspergillus fumigatus (strain ATCC MYA-4609 / CBS 101355 / FGSC A1100 / Af293) (Neosartorya fumigata).